Consider the following 58-residue polypeptide: uncharacterized protein (58 aa).

The chain crosses the membrane as a helical span at residues 12–32; that stretch reads VMTLLITISILIVLAVLLVTI.

Its subcellular location is the cell membrane. This is an uncharacterized protein from Bacillus subtilis (strain 168).